The sequence spans 419 residues: Light-independent protochlorophyllide reductase subunit N (419 aa).

[4Fe-4S] cluster is bound by residues Cys17, Cys42, and Cys103.

Belongs to the BchN/ChlN family. Protochlorophyllide reductase is composed of three subunits; ChlL, ChlN and ChlB. Forms a heterotetramer of two ChlB and two ChlN subunits. [4Fe-4S] cluster is required as a cofactor.

The catalysed reaction is chlorophyllide a + oxidized 2[4Fe-4S]-[ferredoxin] + 2 ADP + 2 phosphate = protochlorophyllide a + reduced 2[4Fe-4S]-[ferredoxin] + 2 ATP + 2 H2O. It functions in the pathway porphyrin-containing compound metabolism; chlorophyll biosynthesis (light-independent). Its function is as follows. Component of the dark-operative protochlorophyllide reductase (DPOR) that uses Mg-ATP and reduced ferredoxin to reduce ring D of protochlorophyllide (Pchlide) to form chlorophyllide a (Chlide). This reaction is light-independent. The NB-protein (ChlN-ChlB) is the catalytic component of the complex. The protein is Light-independent protochlorophyllide reductase subunit N of Prochlorococcus marinus (strain NATL1A).